We begin with the raw amino-acid sequence, 167 residues long: Inclusion membrane protein G (167 aa).

A run of 2 helical transmembrane segments spans residues 37–57 (LSLF…AVLF) and 63–83 (VLPY…AVIV). 2 disordered regions span residues 97–136 (KRSP…STFG) and 148–167 (VSGA…SHSF). Positions 122 to 134 (ESASPQASPTSST) are enriched in low complexity. Residues 161 to 166 (RSRSHS) carry the Phosphorylation-dependent binding motif motif. Position 166 is a phosphoserine (Ser-166).

Phosphorylated by chlamydial kinase Pnk1.

It is found in the secreted. The protein localises to the host vacuole. Its subcellular location is the host pathogen-containing vacuole. It localises to the host pathogen-containing vacuole membrane. Functionally, inclusion membrane protein probably involved in early modification events of the chlamydial inclusion. Binds to the host cell 14-3-3 beta (YWHAB); phosphorylation of Ser-166 is probably required. The chain is Inclusion membrane protein G (incG) from Chlamydia trachomatis serovar D (strain ATCC VR-885 / DSM 19411 / UW-3/Cx).